Consider the following 464-residue polypeptide: Arylsulfatase (464 aa).

The signal sequence occupies residues 1–20 (MNKKAMAAAVSMILAGGAHA). Ca(2+) contacts are provided by Asp-34, Asp-35, and Ser-72. The active-site Nucleophile is Ser-72. The residue at position 72 (Ser-72) is a 3-oxoalanine (Ser). The active site involves His-134. Ca(2+) contacts are provided by Asp-329 and Asn-330.

It belongs to the sulfatase family. Ca(2+) is required as a cofactor. The conversion to 3-oxoalanine (also known as C-formylglycine, FGly), of a serine or cysteine residue in prokaryotes and of a cysteine residue in eukaryotes, is critical for catalytic activity.

Its subcellular location is the periplasm. It catalyses the reaction an aryl sulfate + H2O = a phenol + sulfate + H(+). Its function is as follows. Plays an important role in the mineralization of sulfates. This is Arylsulfatase (atsA) from Klebsiella aerogenes (Enterobacter aerogenes).